The chain runs to 733 residues: Wall-associated receptor kinase 5 (733 aa).

An N-terminal signal peptide occupies residues Met1–Ala23. The Extracellular portion of the chain corresponds to Gln24–Tyr330. Residues Asn57, Asn77, Asn110, Asn137, Asn184, Asn206, Asn218, Asn232, and Asn247 are each glycosylated (N-linked (GlcNAc...) asparagine). The 48-residue stretch at Gly231–Gln278 folds into the EGF-like 1 domain. 6 disulfides stabilise this stretch: Cys235–Cys250, Cys244–Cys261, Cys263–Cys277, Cys283–Cys296, Cys290–Cys305, and Cys307–Cys320. The 43-residue stretch at Asp279–Ile321 folds into the EGF-like 2; calcium-binding domain. Asn289 carries N-linked (GlcNAc...) asparagine glycosylation. Asn314 is a glycosylation site (N-linked (GlcNAc...) asparagine). Residues Leu331–Ile351 traverse the membrane as a helical segment. Residues Ser352–Arg733 are Cytoplasmic-facing. At Thr397 the chain carries Phosphothreonine. In terms of domain architecture, Protein kinase spans Tyr408–Ser691. ATP is bound by residues Leu414–Val422 and Lys436. Phosphotyrosine is present on Tyr481. Asp533 acts as the Proton acceptor in catalysis. Phosphothreonine occurs at positions 567 and 572. Residue Tyr580 is modified to Phosphotyrosine.

The protein belongs to the protein kinase superfamily. Ser/Thr protein kinase family. In terms of tissue distribution, predominantly expressed in green tissues such as stems and leaves.

The protein localises to the membrane. It carries out the reaction L-seryl-[protein] + ATP = O-phospho-L-seryl-[protein] + ADP + H(+). It catalyses the reaction L-threonyl-[protein] + ATP = O-phospho-L-threonyl-[protein] + ADP + H(+). In terms of biological role, serine/threonine-protein kinase that may function as a signaling receptor of extracellular matrix component. Binding to pectin may have significance in the control of cell expansion, morphogenesis and development. The sequence is that of Wall-associated receptor kinase 5 (WAK5) from Arabidopsis thaliana (Mouse-ear cress).